The following is a 397-amino-acid chain: Homocitrate synthase AksA (397 aa).

One can recognise a Pyruvate carboxyltransferase domain in the interval 19-270 (VIVYDTTLRD…DPGFNTEVLA (252 aa)).

The protein belongs to the alpha-IPM synthase/homocitrate synthase family.

The enzyme catalyses acetyl-CoA + 2-oxoglutarate + H2O = (2R)-homocitrate + CoA + H(+). It carries out the reaction 2-oxoadipate + acetyl-CoA + H2O = (R)-dihomocitrate + CoA + H(+). It catalyses the reaction 2-oxoheptanedioate + acetyl-CoA + H2O = (R)-trihomocitrate + CoA + H(+). It participates in organic acid metabolism; 2-oxosuberate biosynthesis. Its function is as follows. Catalyzes the condensation of alpha-ketoglutarate and acetyl-CoA to form (R)-homocitrate. Can also catalyze the condensation of alpha-ketoadipate with acetyl-CoA to form (R)-homo(2)citrate, and the condensation of alpha-ketopimelate with acetyl-CoA to form (R)-homo(3)citrate. These reactions are part of the biosynthesis pathway of coenzyme B and biotin. The chain is Homocitrate synthase AksA (aksA) from Methanopyrus kandleri (strain AV19 / DSM 6324 / JCM 9639 / NBRC 100938).